Reading from the N-terminus, the 574-residue chain is Laccase-12 (574 aa).

Residues 1 to 27 (MAAASSVLRCCLLVAALMTLSAMGAEA) form the signal peptide. Plastocyanin-like domains lie at 35–151 (DVQT…PPAG) and 161–314 (EEVP…YDDP). N81 carries an N-linked (GlcNAc...) asparagine glycan. Residues H85, H87, H130, and H132 each coordinate Cu cation. N173, N190, N206, N242, N302, N335, N342, N381, N388, N398, N434, N441, and N447 each carry an N-linked (GlcNAc...) asparagine glycan. Residues 424 to 558 (NFPYYPLNPF…KMAWLVLDGS (135 aa)) enclose the Plastocyanin-like 3 domain. Residues H475, H478, H480, H537, C538, H539, and H543 each coordinate Cu cation.

This sequence belongs to the multicopper oxidase family. The cofactor is Cu cation.

It is found in the secreted. The protein resides in the extracellular space. The protein localises to the apoplast. It carries out the reaction 4 hydroquinone + O2 = 4 benzosemiquinone + 2 H2O. Functionally, lignin degradation and detoxification of lignin-derived products. The protein is Laccase-12 (LAC12) of Oryza sativa subsp. japonica (Rice).